Consider the following 313-residue polypeptide: Intracellular endo-alpha-(1-&gt;5)-L-arabinanase (313 aa).

Catalysis depends on aspartate 27, which acts as the Proton acceptor. Residues aspartate 27, glycine 105, 144–147 (NAID), and 164–166 (SFW) each bind substrate. Glutamate 201 functions as the Proton donor in the catalytic mechanism. A Ca(2+)-binding site is contributed by histidine 271.

Belongs to the glycosyl hydrolase 43 family. As to quaternary structure, monomer. Requires Ca(2+) as cofactor.

The protein resides in the cytoplasm. It carries out the reaction Endohydrolysis of (1-&gt;5)-alpha-arabinofuranosidic linkages in (1-&gt;5)-arabinans.. It functions in the pathway glycan metabolism; L-arabinan degradation. Involved in the degradation of arabinan and is a key enzyme in the complete degradation of the plant cell wall. Catalyzes the cleavage of endo alpha-(1-&gt;5)-L-arabinofuranosyl residues in debranched arabinan. This is Intracellular endo-alpha-(1-&gt;5)-L-arabinanase (abn-ts) from Geobacillus thermodenitrificans.